A 345-amino-acid polypeptide reads, in one-letter code: Sesquiterpene synthase PILCRDRAFT_825684 (345 aa).

Positions 91, 226, 230, and 234 each coordinate Mg(2+). A DDXXD motif motif is present at residues 91-95 (DELTD). (2E,6E)-farnesyl diphosphate is bound by residues R316 and Y317.

This sequence belongs to the terpene synthase family. Requires Mg(2+) as cofactor.

The catalysed reaction is (2E,6E)-farnesyl diphosphate = viridiflorene + diphosphate. Functionally, terpene cyclase that catalyzes the cyclization of farnesyl diphosphate (FPP) to various sesquiterpenes, including beta-elemene, viridiflorene and gamma-cadinene. Gamma-cadinene is the major product of PILCRDRAFT_825684. This is Sesquiterpene synthase PILCRDRAFT_825684 from Piloderma croceum (strain F 1598).